The primary structure comprises 292 residues: Histamine N-methyltransferase (292 aa).

A substrate-binding site is contributed by glutamate 28. S-adenosyl-L-methionine-binding residues include glycine 60, glutamate 89, glutamine 94, serine 120, and isoleucine 142. Asparagine 283 contributes to the substrate binding site.

Belongs to the class I-like SAM-binding methyltransferase superfamily. HNMT family. As to quaternary structure, monomer.

Its subcellular location is the cytoplasm. It carries out the reaction histamine + S-adenosyl-L-methionine = N(tau)-methylhistamine + S-adenosyl-L-homocysteine + H(+). Its function is as follows. Inactivates histamine by N-methylation. Plays an important role in degrading histamine and in regulating the airway response to histamine. This chain is Histamine N-methyltransferase (HNMT), found in Bos taurus (Bovine).